We begin with the raw amino-acid sequence, 930 residues long: RNA-binding protein 10 (930 aa).

2 stretches are compositionally biased toward basic and acidic residues: residues 1–14 and 21–45; these read MEYERRGGRGDRTG and RSQDDGGENRSRDHDYRDMDYRSYP. Positions 1 to 127 are disordered; it reads MEYERRGGRG…EEDEEEEEKA (127 aa). E2 carries the N-acetylserine modification. Residues R30, S61, and S89 each carry the phosphoserine modification. Acidic residues predominate over residues 59–70; sequence DSSEEQSAEDSY. Basic residues predominate over residues 80-89; it reads RRRRRRHRHS. Positions 98–111 are enriched in basic and acidic residues; sequence RDGDYRDQDYRTEQ. Acidic residues predominate over residues 112–125; that stretch reads GEEEEEEEDEEEEE. Residues 129 to 209 enclose the RRM 1 domain; it reads NIVMLRMLPQ…QKVSMHYSDP (81 aa). The RanBP2-type zinc-finger motif lies at 212 to 242; sequence KINEDWLCNKCGVQNFKRREKCFKCGVPKSE. The RRM 2 domain occupies 300 to 384; sequence DTIILRNLNP…KTINVEFAKG (85 aa). K383 is modified (N6-acetyllysine). Disordered stretches follow at residues 466 to 524, 537 to 569, 620 to 685, and 700 to 753; these read PGIT…AANS, SELQSPTHPSSALPPATSPTAQESYSQYPVPDV, EQSA…DERR, and KGAL…EEKL. Over residues 508–524 the composition is skewed to polar residues; it reads YQQSAEASSSQGTAANS. Residues 541–557 show a composition bias toward low complexity; the sequence is SPTHPSSALPPATSPTA. Basic and acidic residues-rich tracts occupy residues 623 to 639, 653 to 669, and 700 to 709; these read ADGHKETGAPSKEGKEK, KDMERWARSLNKQKENF, and KGALAERQHT. Phosphoserine is present on residues S718, S723, S733, S736, and S738. The span at 743-753 shows a compositional bias: basic and acidic residues; it reads ERGGPEREEKL. A C2H2-type; atypical zinc finger spans residues 759 to 784; the sequence is LACLLCRRQFPSKEALIRHQQLSGLH. Phosphoserine is present on residues S781 and S797. Basic and acidic residues predominate over residues 815-826; it reads RDRAAERREKYG. The tract at residues 815–861 is disordered; sequence RDRAAERREKYGIPEPPEPKRRKYGGISTASVDFEQPTRDGLGSDNI. S845 carries the phosphoserine modification. The G-patch domain occupies 858–904; it reads SDNIGSRMLQAMGWKEGSGLGRKKQGIVTPIEAQTRVRGSGLGARGS. R902 is subject to Omega-N-methylarginine.

In terms of assembly, associates with the spliceosome. Component of a large chromatin remodeling complex, at least composed of MYSM1, PCAF, RBM10 and KIF11/TRIP5.

It is found in the nucleus. Its function is as follows. Binds to ssRNA containing the consensus sequence 5'-AGGUAA-3'. May be involved in post-transcriptional processing, most probably in mRNA splicing. Binds to RNA homopolymers, with a preference for poly(G) and poly(U) and little for poly(A). May bind to specific miRNA hairpins. The polypeptide is RNA-binding protein 10 (Homo sapiens (Human)).